Reading from the N-terminus, the 965-residue chain is Iron-responsive element-binding protein 2 (965 aa).

The interval 142–170 (NAPNPGGGEAQKPTAKLSPLKGQPRKLPC) is disordered. Cys514, Cys580, and Cys583 together coordinate [4Fe-4S] cluster.

Belongs to the aconitase/IPM isomerase family. Requires [4Fe-4S] cluster as cofactor. Ubiquitinated and degraded by the proteasome in presence of high level of iron and oxygen.

The protein localises to the cytoplasm. In terms of biological role, RNA-binding protein that binds to iron-responsive elements (IRES), which are stem-loop structures found in the 5'-UTR of ferritin, and delta aminolevulinic acid synthase mRNAs, and in the 3'-UTR of transferrin receptor mRNA. Binding to the IRE element in ferritin results in the repression of its mRNA translation. Binding of the protein to the transferrin receptor mRNA inhibits the degradation of this otherwise rapidly degraded mRNA. This is Iron-responsive element-binding protein 2 (IREB2) from Gallus gallus (Chicken).